The following is a 350-amino-acid chain: Probable 2-dehydropantoate 2-reductase (350 aa).

Residues 9-14 (GAGSIG) and Asn115 each bind NADP(+). Asn115 serves as a coordination point for substrate. Lys213 acts as the Proton donor in catalysis. Substrate is bound by residues Asn217, Asn221, and Ser295. An NADP(+)-binding site is contributed by Glu307.

This sequence belongs to the ketopantoate reductase family.

The enzyme catalyses (R)-pantoate + NADP(+) = 2-dehydropantoate + NADPH + H(+). It functions in the pathway cofactor biosynthesis; (R)-pantothenate biosynthesis; (R)-pantoate from 3-methyl-2-oxobutanoate: step 2/2. In terms of biological role, catalyzes the NADPH-dependent reduction of ketopantoate into pantoic acid. This chain is Probable 2-dehydropantoate 2-reductase, found in Schizosaccharomyces pombe (strain 972 / ATCC 24843) (Fission yeast).